We begin with the raw amino-acid sequence, 304 residues long: Acetyl-coenzyme A carboxylase carboxyl transferase subunit beta (304 aa).

Positions 23–292 (VWTKCDSCGQ…PNPEAPREGV (270 aa)) constitute a CoA carboxyltransferase N-terminal domain. 4 residues coordinate Zn(2+): Cys-27, Cys-30, Cys-46, and Cys-49. The C4-type zinc finger occupies 27–49 (CDSCGQVLYRAELERNLEVCPKC). A disordered region spans residues 284-304 (NPEAPREGVVVPPVPDQEPEA). The span at 295–304 (PPVPDQEPEA) shows a compositional bias: pro residues.

Belongs to the AccD/PCCB family. As to quaternary structure, acetyl-CoA carboxylase is a heterohexamer composed of biotin carboxyl carrier protein (AccB), biotin carboxylase (AccC) and two subunits each of ACCase subunit alpha (AccA) and ACCase subunit beta (AccD). Zn(2+) serves as cofactor.

The protein localises to the cytoplasm. It carries out the reaction N(6)-carboxybiotinyl-L-lysyl-[protein] + acetyl-CoA = N(6)-biotinyl-L-lysyl-[protein] + malonyl-CoA. Its pathway is lipid metabolism; malonyl-CoA biosynthesis; malonyl-CoA from acetyl-CoA: step 1/1. Functionally, component of the acetyl coenzyme A carboxylase (ACC) complex. Biotin carboxylase (BC) catalyzes the carboxylation of biotin on its carrier protein (BCCP) and then the CO(2) group is transferred by the transcarboxylase to acetyl-CoA to form malonyl-CoA. The chain is Acetyl-coenzyme A carboxylase carboxyl transferase subunit beta from Shigella flexneri.